We begin with the raw amino-acid sequence, 90 residues long: uncharacterized protein (90 aa).

This is an uncharacterized protein from Rickettsia prowazekii (strain Madrid E).